Consider the following 603-residue polypeptide: Elongation factor 4 (603 aa).

Residues 7-189 (SRIRNFCIIA…SIVHLVPPPS (183 aa)) form the tr-type G domain. Residues 19–24 (DHGKST) and 136–139 (NKID) each bind GTP.

The protein belongs to the TRAFAC class translation factor GTPase superfamily. Classic translation factor GTPase family. LepA subfamily.

It localises to the cell inner membrane. It carries out the reaction GTP + H2O = GDP + phosphate + H(+). Required for accurate and efficient protein synthesis under certain stress conditions. May act as a fidelity factor of the translation reaction, by catalyzing a one-codon backward translocation of tRNAs on improperly translocated ribosomes. Back-translocation proceeds from a post-translocation (POST) complex to a pre-translocation (PRE) complex, thus giving elongation factor G a second chance to translocate the tRNAs correctly. Binds to ribosomes in a GTP-dependent manner. The chain is Elongation factor 4 from Crocosphaera subtropica (strain ATCC 51142 / BH68) (Cyanothece sp. (strain ATCC 51142)).